Reading from the N-terminus, the 449-residue chain is G-protein coupled receptor 61 (449 aa).

Over residues 1–14 (MESSPIPQSSGNSS) the composition is skewed to low complexity. Residues 1–29 (MESSPIPQSSGNSSTLGRALQTPGPSTAS) form a disordered region. At 1-44 (MESSPIPQSSGNSSTLGRALQTPGPSTASGVPELGLRDVASESV) the chain is on the extracellular side. An N-linked (GlcNAc...) asparagine glycan is attached at Asn12. Residues 45–67 (ALFFMLLLDLTAVAGNAAVMAVI) form a helical membrane-spanning segment. Residues 68 to 75 (AKTPALRK) lie on the Cytoplasmic side of the membrane. The helical transmembrane segment at 76 to 98 (FVFVFHLCLVDLLAALTLMPLAM) threads the bilayer. The Extracellular segment spans residues 99 to 112 (LSSSALFDHALFGE). Residues 113–135 (VACRLYLFLSVCFVSLAILSVSA) form a helical membrane-spanning segment. The Cytoplasmic segment spans residues 136–155 (INVERYYYVVHPMRYEVRMT). The helical transmembrane segment at 156 to 178 (LGLVASVLVGVWVKALAMASVPV) threads the bilayer. Residues 179–206 (LGRVYWEEGAPSVNPGCSLQWSHSAYCQ) are Extracellular-facing. Residues 207–229 (LFVVVFAVLYFLLPLILIFVVYC) form a helical membrane-spanning segment. Residues 230–287 (SMFRVARVAAMQHGPLPTWMETPRQRSESLSSRSTMVTSSGAHQTTPHRTFGGGKAAV) lie on the Cytoplasmic side of the membrane. A helical transmembrane segment spans residues 288–310 (VLLAVGGQFLLCWLPYFSFHLYV). Topologically, residues 311 to 324 (ALSAQPISAGQVEN) are extracellular. The chain crosses the membrane as a helical span at residues 325–344 (VVTWIGYFCFTSNPFFYGCL). Residues 345–449 (NRQIRGELSK…RPAPSPRLES (105 aa)) are Cytoplasmic-facing.

It belongs to the G-protein coupled receptor 1 family. In terms of assembly, forms heterodimer with MTNR1B. Interacts with ARRB1 and ARRB2 in a spontaneous and agonist-independent manner; leading to the internalization of GPR61 in the endosomal compartment. In terms of tissue distribution, predominantly expressed in the brain and testes, with relatively lower expression observed in the eye, adrenal gland and pituitary gland.

It localises to the cell membrane. It is found in the endosome membrane. Functionally, orphan G-protein coupled receptor. Constitutively activates the G(s)-alpha/cAMP signaling pathway. Shows a reciprocal regulatory interaction with the melatonin receptor MTNR1B most likely through receptor heteromerization. May be involved in the regulation of food intake and body weight. The polypeptide is G-protein coupled receptor 61 (Gpr61) (Mus musculus (Mouse)).